The primary structure comprises 505 residues: MLLSTQSIPIKKSVDDIWPVAGKRVLIRVDFNVPTSSGGIDDDFRIRSAIPTIRRIVDQGGICILISHLGRPTGVDYDTAHAEQEKRQTPVQLPNSRGKTAFFSGLRGDAKATILAWSSQREKAATLSNPYGSGKTAVFARLPEEEKRRLLLRFMSEHKEELFPQLGSAGYEKEFSLEPVAVKLAELLDQHVYFGHDCLGAQADIAKLRCGEVMLLENLRFYTNENSSDERKRMLMARILASYADVYINDAFGTAHRDSASLTGIPRVLQQGAAGYLMEKEISYFSKVLNNPPRPLLAIIGGAKLSDKMQVLENLLDCVDSLFIGGGLAYTFLRSQGYSIGTSHFEEAFVPFAQALPLAGSGRQVRVVLPEDHVCHAHTRPAEAPLTTTSANIPDGYAGLDIGPLTIQSITHLVRQCSSVIWNGPLGMFEMPYYAFGTFSIARVVSQSSAAKGTTSIVGGGDTASAMMKSGEAAHISHISTGGNASLELLEGKVLAAVAVLDNKE.

(2R)-3-phosphoglycerate-binding residues include Val-29, Asp-30, Phe-31, Asn-32, Arg-45, Ser-67, His-68, Gly-70, Arg-71, Leu-219, Arg-220, His-256, and Arg-257. Positions 302 and 303 each coordinate ADP. Gly-302 contributes to the CDP binding site. Ala-303 and Lys-304 together coordinate AMP. Residue Ala-303 participates in ATP binding. Ala-303 contacts Mg(2+). Lys-304 serves as a coordination point for (2R)-3-phosphoglycerate. Asp-307 contributes to the CDP binding site. Asp-307 is a Mg(2+) binding site. ADP is bound by residues Lys-308 and Gly-326. Lys-308 provides a ligand contact to AMP. Lys-308 is a binding site for ATP. Gly-326 is a CDP binding site. Positions 327 and 399 each coordinate AMP. The ATP site is built by Gly-327 and Gly-399. Gly-399 and Asn-423 together coordinate ADP. Positions 424, 426, and 429 each coordinate CDP. ADP is bound by residues Phe-429, Glu-430, Asp-462, and Thr-463. Glu-430 contributes to the AMP binding site. ATP is bound by residues Glu-430, Asp-462, and Thr-463. Asp-462 is a Mg(2+) binding site.

Belongs to the phosphoglycerate kinase family. In terms of assembly, monomer. Mg(2+) serves as cofactor.

The protein resides in the glycosome. The catalysed reaction is (2R)-3-phosphoglycerate + ATP = (2R)-3-phospho-glyceroyl phosphate + ADP. It participates in carbohydrate degradation; glycolysis; pyruvate from D-glyceraldehyde 3-phosphate: step 2/5. This chain is Phosphoglycerate kinase, glycosomal (PGKA), found in Crithidia fasciculata.